The following is a 366-amino-acid chain: Histidinol-phosphate aminotransferase 2 (366 aa).

N6-(pyridoxal phosphate)lysine is present on Lys-226.

Belongs to the class-II pyridoxal-phosphate-dependent aminotransferase family. Histidinol-phosphate aminotransferase subfamily. Homodimer. Pyridoxal 5'-phosphate serves as cofactor.

The catalysed reaction is L-histidinol phosphate + 2-oxoglutarate = 3-(imidazol-4-yl)-2-oxopropyl phosphate + L-glutamate. The protein operates within amino-acid biosynthesis; L-histidine biosynthesis; L-histidine from 5-phospho-alpha-D-ribose 1-diphosphate: step 7/9. This Cupriavidus pinatubonensis (strain JMP 134 / LMG 1197) (Cupriavidus necator (strain JMP 134)) protein is Histidinol-phosphate aminotransferase 2.